Consider the following 515-residue polypeptide: Ribonuclease Y (515 aa).

A helical membrane pass occupies residues 6–26; that stretch reads LTSFVIITLSLAVGLTGGYYG. Positions 205–290 constitute a KH domain; that stretch reads TVSVVPLPND…EMVEKARKEI (86 aa). The region spanning 331–424 is the HD domain; it reads VLRHSVEVAH…VQAADAISAS (94 aa).

It belongs to the RNase Y family.

The protein localises to the cell membrane. In terms of biological role, endoribonuclease that initiates mRNA decay. This chain is Ribonuclease Y, found in Syntrophomonas wolfei subsp. wolfei (strain DSM 2245B / Goettingen).